A 39-amino-acid chain; its full sequence is Alpha-conotoxin ArIA (39 aa).

Positions 1–17 are excised as a propeptide; sequence SDGRNVAAKAFHRIGRT. Intrachain disulfides connect cysteine 22–cysteine 28 and cysteine 23–cysteine 36. The ser-Xaa-Pro motif, crucial for potent interaction with nAChR stretch occupies residues 24–26; it reads SNP. A 4-hydroxyproline; in ArIA modification is found at proline 33.

Belongs to the conotoxin A superfamily. Expressed by the venom duct.

It is found in the secreted. In terms of biological role, alpha-conotoxins act on postsynaptic membranes, they bind to the nicotinic acetylcholine receptors (nAChR) and thus inhibit them. This toxin acts as a competitive inhibitor and is 3-fold more potent on alpha-7/CHRNA7 nAChRs (IC(50)=6 nM) than on alpha-3-beta-2/CHRNA3-CHRNB2 nAChR (IC(50)=18 nM). Acts as a competitive inhibitor and is 33-fold more potent on alpha-7/CHRNA7 nAChRs (IC(50)=1.8 nM) than on alpha-3-beta-2/CHRNA3-CHRNB2 nAChR (IC(50)=60.1 nM). The protein is Alpha-conotoxin ArIA of Conus arenatus (Sand-dusted cone).